Here is a 128-residue protein sequence, read N- to C-terminus: Small nuclear ribonucleoprotein associated homolog 13 (128 aa).

Belongs to the eukaryotic ribosomal protein eL8 family.

Its subcellular location is the nucleus. It is found in the nucleolus. Functionally, binds to the 5'-stem-loop of U4 snRNA and may play a role in the late stage of spliceosome assembly. The protein undergoes a conformational change upon RNA-binding. The sequence is that of Small nuclear ribonucleoprotein associated homolog 13 from Caenorhabditis elegans.